The chain runs to 387 residues: Protein salvador homolog 1 (387 aa).

A phosphoserine mark is found at S95 and S138. 2 consecutive WW domains span residues 201 to 234 (LPLP…HPLE) and 236 to 269 (EGLP…HPCA). A Phosphothreonine modification is found at T212. In terms of domain architecture, SARAH spans 323–370 (ILKWELFQLADLDTYQGMLKLLFMKELEQIVKLYEAYRQALVTELENR).

Homodimer. Stabilized through interaction with STK3/MST2 or STK4/MST1. Interacts (via SARAH domain) with isoform 1 of NEK2. Interacts with ESR1 only in the presence of STK3/MST2. Interacts with WTIP and AJUBA. In terms of processing, phosphorylated by STK3/MST2 and STK4/MST1. Phosphorylation is not required for SAV1 stability and may increase the number of protein binding sites on the scaffold molecule.

Its subcellular location is the nucleus. The protein resides in the cytoplasm. Functionally, regulator of STK3/MST2 and STK4/MST1 in the Hippo signaling pathway which plays a pivotal role in organ size control and tumor suppression by restricting proliferation and promoting apoptosis. The core of this pathway is composed of a kinase cascade wherein STK3/MST2 and STK4/MST1, in complex with its regulatory protein SAV1, phosphorylates and activates LATS1/2 in complex with its regulatory protein MOB1, which in turn phosphorylates and inactivates YAP1 oncoprotein and WWTR1/TAZ. Phosphorylation of YAP1 by LATS1/2 inhibits its translocation into the nucleus to regulate cellular genes important for cell proliferation, cell death, and cell migration. SAV1 is required for STK3/MST2 and STK4/MST1 activation and promotes cell-cycle exit and terminal differentiation in developing epithelial tissues. Plays a role in centrosome disjunction by regulating the localization of NEK2 to centrosomes, and its ability to phosphorylate CROCC and CEP250. In conjunction with STK3/MST2, activates the transcriptional activity of ESR1 through the modulation of its phosphorylation. In Rattus norvegicus (Rat), this protein is Protein salvador homolog 1.